A 164-amino-acid polypeptide reads, in one-letter code: Succinate dehydrogenase assembly factor 2, mitochondrial (164 aa).

A mitochondrion-targeting transit peptide spans 1–27; sequence MAVVTLIPTLARVLSKHSLLSPLLSVT.

It belongs to the SDHAF2 family. As to quaternary structure, interacts with SDHA within the SDH catalytic dimer.

The protein resides in the mitochondrion matrix. In terms of biological role, plays an essential role in the assembly of succinate dehydrogenase (SDH), an enzyme complex (also referred to as respiratory complex II) that is a component of both the tricarboxylic acid (TCA) cycle and the mitochondrial electron transport chain, and which couples the oxidation of succinate to fumarate with the reduction of ubiquinone (coenzyme Q) to ubiquinol. Required for flavinylation (covalent attachment of FAD) of the flavoprotein subunit SDHA of the SDH catalytic dimer. This is Succinate dehydrogenase assembly factor 2, mitochondrial from Rattus norvegicus (Rat).